The sequence spans 94 residues: Integration host factor subunit beta (94 aa).

The protein belongs to the bacterial histone-like protein family. As to quaternary structure, heterodimer of an alpha and a beta chain.

Functionally, this protein is one of the two subunits of integration host factor, a specific DNA-binding protein that functions in genetic recombination as well as in transcriptional and translational control. In Buchnera aphidicola subsp. Acyrthosiphon pisum (strain 5A), this protein is Integration host factor subunit beta.